The following is a 310-amino-acid chain: Ribosomal protein uL3 glutamine methyltransferase (310 aa).

The protein belongs to the protein N5-glutamine methyltransferase family. PrmB subfamily.

It catalyses the reaction L-glutaminyl-[ribosomal protein uL3] + S-adenosyl-L-methionine = N(5)-methyl-L-glutaminyl-[ribosomal protein uL3] + S-adenosyl-L-homocysteine + H(+). Specifically methylates large ribosomal subunit protein uL3 on 'Gln-150'. The protein is Ribosomal protein uL3 glutamine methyltransferase of Shigella dysenteriae serotype 1 (strain Sd197).